A 555-amino-acid polypeptide reads, in one-letter code: Hydroxylamine reductase (555 aa).

Positions 3, 6, 18, and 25 each coordinate [4Fe-4S] cluster. Hybrid [4Fe-2O-2S] cluster-binding residues include His-252, Glu-276, Cys-320, Cys-407, Cys-435, Cys-460, Glu-494, and Lys-496. Cys-407 carries the post-translational modification Cysteine persulfide.

The protein belongs to the HCP family. It depends on [4Fe-4S] cluster as a cofactor. The cofactor is hybrid [4Fe-2O-2S] cluster.

Its subcellular location is the cytoplasm. The enzyme catalyses A + NH4(+) + H2O = hydroxylamine + AH2 + H(+). In terms of biological role, catalyzes the reduction of hydroxylamine to form NH(3) and H(2)O. In Burkholderia lata (strain ATCC 17760 / DSM 23089 / LMG 22485 / NCIMB 9086 / R18194 / 383), this protein is Hydroxylamine reductase.